Consider the following 681-residue polypeptide: Protein hook (681 aa).

The region spanning 6 to 123 (NEMYYSLLEW…RLLQLVLGCA (118 aa)) is the Calponin-homology (CH) domain. Coiled-coil stretches lie at residues 135–439 (EIMS…LKCG) and 482–584 (QTAL…KYRK).

The protein belongs to the hook family. As to quaternary structure, homodimer. Interacts with microtubules via its N-terminus.

The protein resides in the cytoplasm. The protein localises to the cytoskeleton. It is found in the endosome. Its subcellular location is the synapse. In terms of biological role, involved in endocytic trafficking by stabilizing organelles of the endocytic pathway. Probably acts as a cytoskeletal linker protein required to tether endosome vesicles to the cytoskeleton. Involved in modulation of endocytosis at stages required for down-regulation of membrane proteins that control synapse size. Not involved in synaptic vesicle recycling. Required in R7 cells for boss endocytosis into multivesicular bodies (MVBs). Has a role in regulating adult longevity. In Drosophila ananassae (Fruit fly), this protein is Protein hook.